The sequence spans 832 residues: Protein monoglycylase TTLL8 (832 aa).

A compositionally biased stretch (pro residues) spans 1-13 (MSCPPTPNPPFRP). Disordered regions lie at residues 1-84 (MSCP…QDLS) and 277-304 (GKSK…KLPS). 3 stretches are compositionally biased toward basic and acidic residues: residues 46 to 59 (QLRE…ERKK), 66 to 75 (DGDHKEENKL), and 280 to 299 (KKEE…ENPD). Residues 271–624 (YCSKVKGKSK…RKLDRNCDIG (354 aa)) enclose the TTL domain. ATP is bound by residues K397, 403 to 404 (RG), 435 to 438 (QKYI), 448 to 450 (KFD), and 492 to 493 (CN). An a protein-binding site is contributed by R403. S495 lines the L-glutamate pocket. Positions 570, 583, and 585 each coordinate Mg(2+). E583 contributes to the ATP binding site.

The cofactor is Mg(2+). As to expression, highly expressed in testis. Expressed in brain, heart, kidney, liver, lung, muscle, spleen and trachea. Expressed in sperm flagellum. In the brain, specifically expressed in ependymal cilia.

The protein resides in the cytoplasm. It is found in the cytoskeleton. Its subcellular location is the cell projection. The protein localises to the cilium. It localises to the cilium axoneme. The protein resides in the flagellum axoneme. The catalysed reaction is L-glutamyl-[protein] + glycine + ATP = glycyl-L-glutamyl-[protein] + ADP + phosphate + H(+). Its function is as follows. Monoglycylase which modifies both tubulin and non-tubulin proteins, adding a single glycine on the gamma-carboxyl groups of specific glutamate residues to generate monoglycine side chains within the C-terminal tail of target proteins. Not involved in elongation step of the polyglycylation reaction. Preferentially monoglycylates alpha-tubulin over beta-tubulin. Together with TTLL3, mediates microtubule glycylation of primary and motile cilia, which is essential for their stability and maintenance. Together with TTLL3, glycylates sperm flagella which regulates axonemal dynein motor activity, thereby controlling flagellar beat, directional sperm swimming and male fertility. Monoglycylates non-tubulin proteins such as ANP32A, ANP32B, SET, NCL and NAP1. This chain is Protein monoglycylase TTLL8, found in Mus musculus (Mouse).